We begin with the raw amino-acid sequence, 862 residues long: Piwi-like protein 1 (862 aa).

The span at 1 to 13 (MTGRARARARGRA) shows a compositional bias: basic residues. The tract at residues 1 to 48 (MTGRARARARGRARGQETVQHVGAAASQQPGYIPPRPQQSPTEGDLVG) is disordered. R14 is modified (omega-N-methylarginine; by PRMT5; alternate). Residue R14 is modified to Symmetric dimethylarginine; by PRMT5; alternate. R49 bears the Omega-N-methylarginine; by PRMT5 mark. The residue at position 53 (R53) is an Omega-N-methylarginine; alternate. At R53 the chain carries Symmetric dimethylarginine; alternate. Positions 218 to 225 (RRLLKIMN) match the D-box motif. In terms of domain architecture, PAZ spans 279 to 392 (TVLDFMFNLY…LIPELCYLTG (114 aa)). Positions 317–319 (TYR) are required for binding 2'-O-methylated 3'-end of piRNAs. Residue R371 is modified to Omega-N-methylarginine; by PRMT5. The interval 480-616 (SKETRGAPLI…LQMNCKMGGE (137 aa)) is MID region. The region spanning 556-848 (IVVCLLSSNR…LAFLVGQSIH (293 aa)) is the Piwi domain. Catalysis depends on residues D633, E671, D703, and H837.

It belongs to the argonaute family. Piwi subfamily. As to quaternary structure, interacts (via Piwi domain) with DICER1, suggesting that it forms ribonucleoprotein RISC complexes; this interaction is regulated by HSP90AB1 activity. Interacts with MAEL, KIF17, PABPC1, PRMT5 and WDR77. Interacts (when methylated on arginine residues) with TDRD1, TDRKH/TDRD2, RNF17/TDRD4, TDRD6, TDRD7 and TDRD9. Interacts with CLOCK. Interacts with MOV10L1. Interacts with ANAPC10; interaction oly takes place following piRNA-binding. Interacts with RNF8; leading to sequester RNF8 in the cytoplasm. Interacts with Tex19.1 and, probably, Tex19.2. Mg(2+) is required as a cofactor. Post-translationally, ubiquitinated by the anaphase promoting complex/cyclosome (APC/C) in late spermatids, leading to its degradation. Ubiquitination only takes place following piRNA-binding in adult testis. Ubiquitination and degradation in late spermatogenesis by APC/C is probably required to release RNF8 from the cytoplasm and promote histone to protamine exchange by RNF8. Arginine methylation by PRMT5 is required for the interaction with Tudor domain-containing protein (TDRD1, TDRKH/TDRD2, RNF17/TDRD4, TDRD6, TDRD7 and TDRD9) and subsequent localization to the meiotic nuage, also named P granule. In terms of tissue distribution, expressed in brain. Expressed in testis, specifically in spermatocytes (at protein level). Only detected in germ lineage cells of adult testis. Expressed in male gonads 2 weeks after birth at the initiation of spermatogenesis, but not expressed in female gonads.

Its subcellular location is the cytoplasm. Functionally, endoribonuclease that plays a central role in postnatal germ cells by repressing transposable elements and preventing their mobilization, which is essential for the germline integrity. Acts via the piRNA metabolic process, which mediates the repression of transposable elements during meiosis by forming complexes composed of piRNAs and Piwi proteins and governs the methylation and subsequent repression of transposons. Directly binds methylated piRNAs, a class of 24 to 30 nucleotide RNAs that are generated by a Dicer-independent mechanism and are primarily derived from transposons and other repeated sequence elements. Strongly prefers a uridine in the first position of their guide (g1U preference, also named 1U-bias). Not involved in the piRNA amplification loop, also named ping-pong amplification cycle. Acts as an endoribonuclease that cleaves transposon messenger RNAs. Besides their function in transposable elements repression, piRNAs are probably involved in other processes during meiosis such as translation regulation. Probable component of some RISC complex, which mediates RNA cleavage and translational silencing. Also plays a role in the formation of chromatoid bodies and is required for some miRNAs stability. Required to sequester RNF8 in the cytoplasm until late spermatogenesis; RNF8 being released upon ubiquitination and degradation of PIWIL1. The polypeptide is Piwi-like protein 1 (Mus musculus (Mouse)).